A 518-amino-acid polypeptide reads, in one-letter code: Protein nucleotidyltransferase YdiU (518 aa).

The span at 1–10 (MTHLHFDNRL) shows a compositional bias: basic and acidic residues. A disordered region spans residues 1-25 (MTHLHFDNRLRQQLPGDPEEGARRR). The ATP site is built by G100, G102, R103, K123, D135, G136, R193, and R200. D270 functions as the Proton acceptor in the catalytic mechanism. The Mg(2+) site is built by N271 and D280. Residue D280 coordinates ATP.

Belongs to the SELO family. Mg(2+) is required as a cofactor. It depends on Mn(2+) as a cofactor.

It carries out the reaction L-seryl-[protein] + ATP = 3-O-(5'-adenylyl)-L-seryl-[protein] + diphosphate. It catalyses the reaction L-threonyl-[protein] + ATP = 3-O-(5'-adenylyl)-L-threonyl-[protein] + diphosphate. The enzyme catalyses L-tyrosyl-[protein] + ATP = O-(5'-adenylyl)-L-tyrosyl-[protein] + diphosphate. The catalysed reaction is L-histidyl-[protein] + UTP = N(tele)-(5'-uridylyl)-L-histidyl-[protein] + diphosphate. It carries out the reaction L-seryl-[protein] + UTP = O-(5'-uridylyl)-L-seryl-[protein] + diphosphate. It catalyses the reaction L-tyrosyl-[protein] + UTP = O-(5'-uridylyl)-L-tyrosyl-[protein] + diphosphate. In terms of biological role, nucleotidyltransferase involved in the post-translational modification of proteins. It can catalyze the addition of adenosine monophosphate (AMP) or uridine monophosphate (UMP) to a protein, resulting in modifications known as AMPylation and UMPylation. The polypeptide is Protein nucleotidyltransferase YdiU (Xanthomonas euvesicatoria pv. vesicatoria (strain 85-10) (Xanthomonas campestris pv. vesicatoria)).